The primary structure comprises 251 residues: GTP cyclohydrolase 1 type 2 homolog (251 aa).

Residues H63, H64, D101, H219, and E223 each coordinate a divalent metal cation.

Belongs to the GTP cyclohydrolase I type 2/NIF3 family. In terms of assembly, toroid-shaped homohexamer. In the hexamer, 3 dimers assemble to form a ring-like structure surrounding a central hole.

This chain is GTP cyclohydrolase 1 type 2 homolog, found in Haemophilus influenzae (strain ATCC 51907 / DSM 11121 / KW20 / Rd).